We begin with the raw amino-acid sequence, 123 residues long: MPTVNQLIRKPRVVPVKRNKVPALQANPQKRGVCTRVYTTTPKKPNSALRKVAKVRLTNGFEVIGYIPGEGHNLQEHSVVVIRGGRVKDLPGVRYHIIRGLLDTQGVKNRKQRRSKYGAKRPK.

Aspartate 89 carries the 3-methylthioaspartic acid modification.

The protein belongs to the universal ribosomal protein uS12 family. As to quaternary structure, part of the 30S ribosomal subunit. Contacts proteins S8 and S17. May interact with IF1 in the 30S initiation complex.

Its function is as follows. With S4 and S5 plays an important role in translational accuracy. In terms of biological role, interacts with and stabilizes bases of the 16S rRNA that are involved in tRNA selection in the A site and with the mRNA backbone. Located at the interface of the 30S and 50S subunits, it traverses the body of the 30S subunit contacting proteins on the other side and probably holding the rRNA structure together. The combined cluster of proteins S8, S12 and S17 appears to hold together the shoulder and platform of the 30S subunit. This chain is Small ribosomal subunit protein uS12, found in Bartonella bacilliformis (strain ATCC 35685 / KC583 / Herrer 020/F12,63).